The chain runs to 216 residues: MEIQKFIDHTILKPEATEEQVKKLCKEARDYKFASVCVNPYYTSLVSKELQGTDVKTCVVIGFPLGANTKEVKAFETKQAIENGAKEVDMVINIGALKDKKYDVVKEDIEAVVNEAKGKALVKVIIETCLLTDEEKVKACEISKEVGADFVKTSTGFSTGGAKKEDVKLMRETVGENIGVKASGGIRDYKTSLEMIEAGANRIGASAGIKIVEESK.

Aspartate 89 (proton donor/acceptor) is an active-site residue. The active-site Schiff-base intermediate with acetaldehyde is lysine 152. The Proton donor/acceptor role is filled by lysine 181.

It belongs to the DeoC/FbaB aldolase family. DeoC type 1 subfamily.

The protein localises to the cytoplasm. The enzyme catalyses 2-deoxy-D-ribose 5-phosphate = D-glyceraldehyde 3-phosphate + acetaldehyde. It participates in carbohydrate degradation; 2-deoxy-D-ribose 1-phosphate degradation; D-glyceraldehyde 3-phosphate and acetaldehyde from 2-deoxy-alpha-D-ribose 1-phosphate: step 2/2. Its function is as follows. Catalyzes a reversible aldol reaction between acetaldehyde and D-glyceraldehyde 3-phosphate to generate 2-deoxy-D-ribose 5-phosphate. The polypeptide is Deoxyribose-phosphate aldolase (Clostridium tetani (strain Massachusetts / E88)).